Reading from the N-terminus, the 276-residue chain is Large ribosomal subunit protein uL2 (276 aa).

The segment at 218–276 (PYVRGSAMNPVDHPHGGGEGRAPIGRPAPSTPWGKPALGLKTRKKNKKSNKYIVRRRKK) is disordered. Positions 258–276 (KTRKKNKKSNKYIVRRRKK) are enriched in basic residues.

This sequence belongs to the universal ribosomal protein uL2 family. As to quaternary structure, part of the 50S ribosomal subunit. Forms a bridge to the 30S subunit in the 70S ribosome.

Functionally, one of the primary rRNA binding proteins. Required for association of the 30S and 50S subunits to form the 70S ribosome, for tRNA binding and peptide bond formation. It has been suggested to have peptidyltransferase activity; this is somewhat controversial. Makes several contacts with the 16S rRNA in the 70S ribosome. This is Large ribosomal subunit protein uL2 from Finegoldia magna (strain ATCC 29328 / DSM 20472 / WAL 2508) (Peptostreptococcus magnus).